A 243-amino-acid chain; its full sequence is Probable transcriptional regulatory protein BH0025 (243 aa).

It belongs to the TACO1 family.

The protein resides in the cytoplasm. The protein is Probable transcriptional regulatory protein BH0025 of Borrelia hermsii (strain HS1 / DAH).